The sequence spans 549 residues: Arginine--tRNA ligase (549 aa).

The short motif at 113–123 (ANPDGPLHIGH) is the 'HIGH' region element.

It belongs to the class-I aminoacyl-tRNA synthetase family.

The protein localises to the cytoplasm. The enzyme catalyses tRNA(Arg) + L-arginine + ATP = L-arginyl-tRNA(Arg) + AMP + diphosphate. This chain is Arginine--tRNA ligase (argS), found in Archaeoglobus fulgidus (strain ATCC 49558 / DSM 4304 / JCM 9628 / NBRC 100126 / VC-16).